The sequence spans 513 residues: Cytochrome P450 1A2 (513 aa).

Serine 68 is a glycosylation site (O-linked (GlcNAc) serine). Residue phenylalanine 225 coordinates substrate. Cysteine 456 contributes to the heme binding site.

Belongs to the cytochrome P450 family. As to quaternary structure, interacts with PGRMC1; the interaction requires PGRMC1 homodimerization. It depends on heme as a cofactor.

The protein localises to the endoplasmic reticulum membrane. Its subcellular location is the microsome membrane. It carries out the reaction an organic molecule + reduced [NADPH--hemoprotein reductase] + O2 = an alcohol + oxidized [NADPH--hemoprotein reductase] + H2O + H(+). The enzyme catalyses 17beta-estradiol + reduced [NADPH--hemoprotein reductase] + O2 = 2-hydroxy-17beta-estradiol + oxidized [NADPH--hemoprotein reductase] + H2O + H(+). The catalysed reaction is 17beta-estradiol + reduced [NADPH--hemoprotein reductase] + O2 = 4-hydroxy-17beta-estradiol + oxidized [NADPH--hemoprotein reductase] + H2O + H(+). It catalyses the reaction estrone + reduced [NADPH--hemoprotein reductase] + O2 = 2-hydroxyestrone + oxidized [NADPH--hemoprotein reductase] + H2O + H(+). It carries out the reaction estrone + reduced [NADPH--hemoprotein reductase] + O2 = 4-hydroxyestrone + oxidized [NADPH--hemoprotein reductase] + H2O + H(+). The enzyme catalyses cholesterol + reduced [NADPH--hemoprotein reductase] + O2 = 25-hydroxycholesterol + oxidized [NADPH--hemoprotein reductase] + H2O + H(+). The catalysed reaction is all-trans-retinol + reduced [NADPH--hemoprotein reductase] + O2 = all-trans-retinal + oxidized [NADPH--hemoprotein reductase] + 2 H2O + H(+). It catalyses the reaction all-trans-retinal + reduced [NADPH--hemoprotein reductase] + O2 = all-trans-retinoate + oxidized [NADPH--hemoprotein reductase] + H2O + 2 H(+). It carries out the reaction (5Z,8Z,11Z,14Z)-eicosatetraenoate + reduced [NADPH--hemoprotein reductase] + O2 = (14R,15S)-epoxy-(5Z,8Z,11Z)-eicosatrienoate + oxidized [NADPH--hemoprotein reductase] + H2O + H(+). The enzyme catalyses (5Z,8Z,11Z,14Z)-eicosatetraenoate + reduced [NADPH--hemoprotein reductase] + O2 = (14S,15R)-epoxy-(5Z,8Z,11Z)-eicosatrienoate + oxidized [NADPH--hemoprotein reductase] + H2O + H(+). The catalysed reaction is (5Z,8Z,11Z,14Z,17Z)-eicosapentaenoate + reduced [NADPH--hemoprotein reductase] + O2 = (17R,18S)-epoxy-(5Z,8Z,11Z,14Z)-eicosatetraenoate + oxidized [NADPH--hemoprotein reductase] + H2O + H(+). It catalyses the reaction (4Z,7Z,10Z,13Z,16Z,19Z)-docosahexaenoate + reduced [NADPH--hemoprotein reductase] + O2 = (19R,20S)-epoxy-(4Z,7Z,10Z,13Z,16Z)-docosapentaenoate + oxidized [NADPH--hemoprotein reductase] + H2O + H(+). It carries out the reaction (5S)-hydroperoxy-(6E,8Z,11Z,14Z)-eicosatetraenoate = 5-oxo-(6E,8Z,11Z,14Z)-eicosatetraenoate + H2O. The enzyme catalyses (12S)-hydroperoxy-(5Z,8Z,10E,14Z)-eicosatetraenoate = 12-oxo-(5Z,8Z,10E,14Z)-eicosatetraenoate + H2O. The catalysed reaction is (15S)-hydroperoxy-(5Z,8Z,11Z,13E)-eicosatetraenoate = 15-oxo-(5Z,8Z,11Z,13E)-eicosatetraenoate + H2O. It catalyses the reaction (13S)-hydroperoxy-(9Z,11E)-octadecadienoate = 13-oxo-(9Z,11E)-octadecadienoate + H2O. It carries out the reaction (5Z,8Z,11Z,14Z)-eicosatetraenoate + reduced [NADPH--hemoprotein reductase] + O2 = 13-hydroxy-(5Z,8Z,11Z,14Z)-eicosatetraenoate + oxidized [NADPH--hemoprotein reductase] + H2O + H(+). The enzyme catalyses (5Z,8Z,11Z,14Z)-eicosatetraenoate + reduced [NADPH--hemoprotein reductase] + O2 = 19-hydroxy-(5Z,8Z,11Z,14Z)-eicosatetraenoate + oxidized [NADPH--hemoprotein reductase] + H2O + H(+). The catalysed reaction is (9Z,12Z)-octadecadienoate + reduced [NADPH--hemoprotein reductase] + O2 = 11-hydroxy-(9Z,12Z)-octadecadienoate + oxidized [NADPH--hemoprotein reductase] + H2O + H(+). It participates in cofactor metabolism; retinol metabolism. It functions in the pathway steroid metabolism; cholesterol metabolism. The protein operates within lipid metabolism; arachidonate metabolism. A cytochrome P450 monooxygenase involved in the metabolism of various endogenous substrates, including fatty acids, steroid hormones and vitamins. Mechanistically, uses molecular oxygen inserting one oxygen atom into a substrate, and reducing the second into a water molecule, with two electrons provided by NADPH via cytochrome P450 reductase (NADPH--hemoprotein reductase). Catalyzes the hydroxylation of carbon-hydrogen bonds. Exhibits high catalytic activity for the formation of hydroxyestrogens from estrone (E1) and 17beta-estradiol (E2), namely 2-hydroxy E1 and E2. Metabolizes cholesterol toward 25-hydroxycholesterol, a physiological regulator of cellular cholesterol homeostasis. May act as a major enzyme for all-trans retinoic acid biosynthesis in the liver. Catalyzes two successive oxidative transformation of all-trans retinol to all-trans retinal and then to the active form all-trans retinoic acid. Primarily catalyzes stereoselective epoxidation of the last double bond of polyunsaturated fatty acids (PUFA), displaying a strong preference for the (R,S) stereoisomer. Catalyzes bisallylic hydroxylation and omega-1 hydroxylation of PUFA. May also participate in eicosanoids metabolism by converting hydroperoxide species into oxo metabolites (lipoxygenase-like reaction, NADPH-independent). Plays a role in the oxidative metabolism of xenobiotics. Catalyzes the N-hydroxylation of heterocyclic amines and the O-deethylation of phenacetin. Metabolizes caffeine via N3-demethylation. The sequence is that of Cytochrome P450 1A2 (Cyp1a2) from Mus musculus (Mouse).